The primary structure comprises 257 residues: Trans-aconitate 2-methyltransferase (257 aa).

It belongs to the methyltransferase superfamily. Tam family.

It is found in the cytoplasm. It catalyses the reaction trans-aconitate + S-adenosyl-L-methionine = (E)-3-(methoxycarbonyl)pent-2-enedioate + S-adenosyl-L-homocysteine. Catalyzes the S-adenosylmethionine monomethyl esterification of trans-aconitate. This chain is Trans-aconitate 2-methyltransferase, found in Sinorhizobium fredii (strain NBRC 101917 / NGR234).